A 961-amino-acid polypeptide reads, in one-letter code: Thrombospondin-4 (961 aa).

The first 23 residues, 1 to 23 (MLAPRGATFLLLHLALQPWLGAG), serve as a signal peptide directing secretion. Positions 24 to 192 (AQATPQVFDL…LEELKLVVRG (169 aa)) constitute a Laminin G-like domain. The 40-residue stretch at 286–325 (PVRRCDSNPCFRGVRCTDTRDGFQCGPCPEGYTGNGIVCS) folds into the EGF-like 1 domain. Disulfide bonds link Cys290/Cys301, Cys295/Cys310, Cys313/Cys324, Cys330/Cys341, Cys335/Cys350, Cys353/Cys377, Cys383/Cys394, Cys388/Cys403, Cys406/Cys418, Cys424/Cys438, Cys432/Cys448, Cys450/Cys461, Cys477/Cys482, Cys487/Cys507, Cys523/Cys543, Cys546/Cys566, Cys582/Cys602, Cys605/Cys625, Cys643/Cys663, Cys683/Cys703, and Cys719/Cys940. The 38-residue stretch at 326 to 363 (DVDECRYHPCYPGVRCVNLAPGFRCDACPVGFTGPMMQ) folds into the EGF-like 2; calcium-binding domain. One can recognise an EGF-like 3; calcium-binding domain in the interval 379–419 (DIDECRNGACVLNSICINTLGSYRCGPCKPGYIGDQMRGCK). The region spanning 420–462 (MERNCRDPELNPCSVNAQCIEERQGDVTCVCGVGWAGDGYICG) is the EGF-like 4 domain. TSP type-3 repeat units lie at residues 463-495 (KDVD…NSGQ), 496-531 (EDAD…NVDQ), 532-554 (RNSD…NNDQ), 555-590 (KDTD…NSDQ), 591-613 (EDRD…NPNQ), 614-651 (SDVD…NSAQ), 652-691 (LDTD…NPAQ), and 692-727 (EDSN…EVTL). The short motif at 562-564 (KGD) is the Cell attachment site element. Positions 581-671 (NCQKVPNSDQ…ECDDDDDNDG (91 aa)) are disordered. The N-linked (GlcNAc...) asparagine glycan is linked to Asn612. The span at 640-652 (TDNCPTVINSAQL) shows a compositional bias: polar residues. Residues 660 to 671 (GDECDDDDDNDG) show a composition bias toward acidic residues. The TSP C-terminal domain maps to 731–945 (RAYQTVVLDP…LKYRCNDTIP (215 aa)). N-linked (GlcNAc...) asparagine glycosylation occurs at Asn941.

The protein belongs to the thrombospondin family. Homopentamer; disulfide-linked. Interacts with PTBP3. Interacts (via EGF-like 3; calcium-binding domain) with ATF6 and facilitates its processing, activation and nuclear translocation. Interacts with NOTCH1.

The protein localises to the endoplasmic reticulum. The protein resides in the sarcoplasmic reticulum. Its subcellular location is the secreted. It localises to the extracellular space. It is found in the extracellular matrix. Adhesive glycoprotein that mediates cell-to-cell and cell-to-matrix interactions and is involved in various processes including cellular proliferation, migration, adhesion and attachment, inflammatory response to CNS injury, regulation of vascular inflammation and adaptive responses of the heart to pressure overload and in myocardial function and remodeling. Binds to structural extracellular matrix (ECM) proteins and modulates the ECM in response to tissue damage, contributing to cardioprotective and adaptive ECM remodeling. Plays a role in ER stress response, via its interaction with the activating transcription factor 6 alpha (ATF6) which produces adaptive ER stress response factors and protects myocardium from pressure overload. May contribute to spinal presynaptic hypersensitivity and neuropathic pain states after peripheral nerve injury. May play a role in regulating protective astrogenesis from the subventricular zone (SVZ) niche after injury in a NOTCH1-dependent manner. This chain is Thrombospondin-4 (THBS4), found in Bos taurus (Bovine).